A 215-amino-acid polypeptide reads, in one-letter code: 3,4-dihydroxy-2-butanone 4-phosphate synthase (215 aa).

D-ribulose 5-phosphate is bound by residues 38 to 39 (RE), Asp-43, 151 to 155 (RRGHT), and Glu-175. Residue Glu-39 participates in Mg(2+) binding. His-154 provides a ligand contact to Mg(2+).

This sequence belongs to the DHBP synthase family. Homodimer. It depends on Mg(2+) as a cofactor. Requires Mn(2+) as cofactor.

The catalysed reaction is D-ribulose 5-phosphate = (2S)-2-hydroxy-3-oxobutyl phosphate + formate + H(+). The protein operates within cofactor biosynthesis; riboflavin biosynthesis; 2-hydroxy-3-oxobutyl phosphate from D-ribulose 5-phosphate: step 1/1. Functionally, catalyzes the conversion of D-ribulose 5-phosphate to formate and 3,4-dihydroxy-2-butanone 4-phosphate. The chain is 3,4-dihydroxy-2-butanone 4-phosphate synthase from Haemophilus influenzae (strain PittEE).